We begin with the raw amino-acid sequence, 485 residues long: Glutamyl-tRNA(Gln) amidotransferase subunit A (485 aa).

Residues K76 and S151 each act as charge relay system in the active site. S175 serves as the catalytic Acyl-ester intermediate.

The protein belongs to the amidase family. GatA subfamily. Heterotrimer of A, B and C subunits.

It catalyses the reaction L-glutamyl-tRNA(Gln) + L-glutamine + ATP + H2O = L-glutaminyl-tRNA(Gln) + L-glutamate + ADP + phosphate + H(+). Allows the formation of correctly charged Gln-tRNA(Gln) through the transamidation of misacylated Glu-tRNA(Gln) in organisms which lack glutaminyl-tRNA synthetase. The reaction takes place in the presence of glutamine and ATP through an activated gamma-phospho-Glu-tRNA(Gln). This Pelagibacter ubique (strain HTCC1062) protein is Glutamyl-tRNA(Gln) amidotransferase subunit A.